The sequence spans 358 residues: MTEFFSGNRGEWSEPYALFKLLADGQLYLGDSQLNKLGIVMPILSILRQEKNYESSYILHNNSQNIIVTYNNEKFTVPISGFQEKAVLLLSEIKNASGNRAFSIPSIDDFLKKLGFTHLSASSSSKSDIHIVVHDLRTGITPTLGFSIKSQLGSPATLLNASKATNFTFKIYNLKDKQIEYINSLSGIKEKIKEIFSQDGKLEFVKVESCKFSNNLTLIDTKLPEILAEMILLYYSSKLNKIDDVTEHISRLNPLNYNLSCNHNYYEYKVKHFLNDVALGMRPDDVWLGQYDATGGYLVVKEDGELLCYHIYSKNSFEDYLYCNTKFDTPSSSRHDFGHIYQVNHDFFIKLNVQIRFL.

In terms of assembly, homodimer.

The enzyme catalyses Endonucleolytic cleavage of DNA to give specific double-stranded fragments with terminal 5'-phosphates.. Functionally, an E and P subtype restriction enzyme that recognizes the double-stranded sequence 5'-CCGG-3' and cleaves after C-1. The polypeptide is Type II restriction enzyme HpaII (Haemophilus parainfluenzae).